A 782-amino-acid polypeptide reads, in one-letter code: Protein bicaudal D (782 aa).

A coiled-coil region spans residues 15–77; that stretch reads VQDLQMEVER…RHELDITQEA (63 aa). S103 is subject to Phosphoserine. A coiled-coil region spans residues 107-249; that stretch reads ETSLNLQIFD…LETLQGEREA (143 aa). S285, S288, and S305 each carry phosphoserine. T306 carries the phosphothreonine modification. Phosphoserine is present on S310. 2 coiled-coil regions span residues 320 to 368 and 444 to 477; these read SEIH…FMSR and TTTLRNEVTNLKNKLLATEQKSLDLQSDVQTLTH. Position 528 is a phosphoserine (S528). 2 coiled-coil regions span residues 603 to 630 and 695 to 743; these read EKVNTEEMEELQEQIVKLKSLLSVKREQ and CEEY…MEMD. The interval 699-722 is interaction with Rab6; it reads VTQVDDLNRQLEAAEEEKKTLNQL. The disordered stretch occupies residues 744–782; sequence REMRHVRRPMPAQRGTSGKSSFSTRPSSRNPASSNANPF. A compositionally biased stretch (polar residues) spans 757 to 767; it reads RGTSGKSSFST. Over residues 768 to 782 the composition is skewed to low complexity; sequence RPSSRNPASSNANPF.

The protein belongs to the BicD family. As to quaternary structure, may homodimerize but does not interact with BicDR. Interacts (via C-terminal domain) with Rab6. In terms of tissue distribution, in ovaries, expressed in oocyte and nurse cells.

The protein localises to the cytoplasm. It localises to the cytoskeleton. This protein is essential for differentiation. It may play a role in localizing of Nanos (a maternal determinant) activity in oocytes. Functions redundantly with BicDR. During oogenesis, plays a specific role, together with Rab6 but independently of Sec5, in the polarization of the oocyte microtubule cytoskeleton, in oskar mRNA localization and in the anterodorsal secretion of grk. Plays a role in the biogenesis of annulate lamellae containing nuclear pore complex components. During macrochaetae development, together with BicDR, involved in Rab 6 and Spn-F stability and distribution and actin cytoskeleton organization. The chain is Protein bicaudal D from Drosophila melanogaster (Fruit fly).